A 362-amino-acid polypeptide reads, in one-letter code: MSIENLARTNVRDLTPYQSARRLGGNGDVWLNANEYPIAPEFQLTAQTFNRYPECQPALVIERYAEYAGVKKEQVLVSRGADEGIELLIRAFCEPGKDAILFCPPTYGMYAVSAETFGVERRTVAAKQDWQLDLPAIADSLDNVKLIYVCSPNNPTGNLIDANDLRSLLEMAKGKAIVAVDEAYIEFCPQASVAGWLNDYPHLAILRTLSKAFALAGLRCGFTLGNEDLIALLLKVIAPYPLSTPVADIAAQALSTEGIRIMRQRVTEIAANRSWLLQALQNCACVEQVFTSDSNYLLARFTASSNVFKTLWDQGIILRDQNKQPGLSGCLRITIGTREECQRVVDALSALPGATKTRQEPM.

Lysine 211 is modified (N6-(pyridoxal phosphate)lysine).

The protein belongs to the class-II pyridoxal-phosphate-dependent aminotransferase family. Histidinol-phosphate aminotransferase subfamily. In terms of assembly, homodimer. Requires pyridoxal 5'-phosphate as cofactor.

It catalyses the reaction L-histidinol phosphate + 2-oxoglutarate = 3-(imidazol-4-yl)-2-oxopropyl phosphate + L-glutamate. It participates in amino-acid biosynthesis; L-histidine biosynthesis; L-histidine from 5-phospho-alpha-D-ribose 1-diphosphate: step 7/9. This Serratia proteamaculans (strain 568) protein is Histidinol-phosphate aminotransferase.